Reading from the N-terminus, the 220-residue chain is CDP-diacylglycerol--inositol 3-phosphatidyltransferase (220 aa).

The Cytoplasmic segment spans residues 1-20; sequence MSSNSTPEKVTAEHVLWYIP. Residues 21–41 form a helical membrane-spanning segment; sequence NKIGYVRVITAALSFFVMKNH. Residues 42–45 lie on the Lumenal side of the membrane; it reads PTAF. The helical transmembrane segment at 46 to 66 threads the bilayer; it reads TWLYSTSCLLDALDGTMARKY. Aspartate 56 and aspartate 59 together coordinate Mg(2+). Glycine 60, arginine 64, and serine 70 together coordinate a CDP-1,2-diacyl-sn-glycerol. The Cytoplasmic segment spans residues 67–75; it reads NQVSSLGAV. Residues 76–96 form a helical membrane-spanning segment; the sequence is LDMVTDRSSTAGLMCFLCVQY. Mg(2+)-binding residues include aspartate 77 and aspartate 81. The Proton acceptor role is filled by aspartate 81. Topologically, residues 97 to 98 are lumenal; that stretch reads PQ. The chain crosses the membrane as a helical span at residues 99 to 119; that stretch reads WCVFFQLMLGLDITSHYMHMY. Topologically, residues 120–145 are cytoplasmic; it reads ASLSAGKTSHKSVGEGESRLLHLYYT. Residues 146 to 166 traverse the membrane as a helical segment; sequence RRDVLFTICAFNELFYAGLYL. Residues 167–170 are Lumenal-facing; that stretch reads QLFS. The chain crosses the membrane as a helical span at residues 171-191; it reads NSATFGKWTTIISFPGYVFKQ. Topologically, residues 192–220 are cytoplasmic; sequence TANVVQLKRAALILADNDAKNANEKNKTY.

It belongs to the CDP-alcohol phosphatidyltransferase class-I family. Mn(2+) serves as cofactor. The cofactor is Mg(2+).

Its subcellular location is the microsome membrane. The protein localises to the endoplasmic reticulum membrane. It is found in the golgi apparatus membrane. It localises to the mitochondrion outer membrane. The enzyme catalyses a CDP-1,2-diacyl-sn-glycerol + myo-inositol = a 1,2-diacyl-sn-glycero-3-phospho-(1D-myo-inositol) + CMP + H(+). In terms of biological role, catalyzes the synthesis of phosphatidylinositol (PtdIns). This chain is CDP-diacylglycerol--inositol 3-phosphatidyltransferase, found in Saccharomyces cerevisiae (strain ATCC 204508 / S288c) (Baker's yeast).